A 265-amino-acid polypeptide reads, in one-letter code: Shikimate dehydrogenase (NADP(+)) (265 aa).

Residues 15–17 (SLS) and Thr62 each bind shikimate. Lys66 functions as the Proton acceptor in the catalytic mechanism. Shikimate contacts are provided by Asn87 and Asp102. NADP(+)-binding positions include 125 to 129 (GAGGA), 149 to 154 (NRTLEK), and Leu209. Residue Tyr211 coordinates shikimate. Gly233 lines the NADP(+) pocket.

It belongs to the shikimate dehydrogenase family. In terms of assembly, homodimer.

The enzyme catalyses shikimate + NADP(+) = 3-dehydroshikimate + NADPH + H(+). The protein operates within metabolic intermediate biosynthesis; chorismate biosynthesis; chorismate from D-erythrose 4-phosphate and phosphoenolpyruvate: step 4/7. Functionally, involved in the biosynthesis of the chorismate, which leads to the biosynthesis of aromatic amino acids. Catalyzes the reversible NADPH linked reduction of 3-dehydroshikimate (DHSA) to yield shikimate (SA). The chain is Shikimate dehydrogenase (NADP(+)) from Legionella pneumophila (strain Corby).